Consider the following 453-residue polypeptide: uncharacterized protein (453 aa).

Positions 74, 80, 83, and 162 each coordinate [4Fe-4S] cluster. Positions 286, 315, 336, and 384 each coordinate S-adenosyl-L-methionine. The active-site Nucleophile is Cys-411.

This sequence belongs to the class I-like SAM-binding methyltransferase superfamily. RNA M5U methyltransferase family.

This is an uncharacterized protein from Staphylococcus aureus (strain Mu50 / ATCC 700699).